We begin with the raw amino-acid sequence, 396 residues long: Enoyl-[acyl-carrier-protein] reductase [NADH] (396 aa).

NAD(+) contacts are provided by residues 48–53, 74–75, 111–112, and 139–140; these read GASTGY, FE, DA, and LA. Y225 provides a ligand contact to substrate. The Proton donor role is filled by Y235. NAD(+) is bound by residues K244 and 273-275; that span reads VVT.

Belongs to the TER reductase family. In terms of assembly, monomer.

It carries out the reaction a 2,3-saturated acyl-[ACP] + NAD(+) = a (2E)-enoyl-[ACP] + NADH + H(+). The protein operates within lipid metabolism; fatty acid biosynthesis. In terms of biological role, involved in the final reduction of the elongation cycle of fatty acid synthesis (FAS II). Catalyzes the reduction of a carbon-carbon double bond in an enoyl moiety that is covalently linked to an acyl carrier protein (ACP). In Teredinibacter turnerae (strain ATCC 39867 / T7901), this protein is Enoyl-[acyl-carrier-protein] reductase [NADH].